Reading from the N-terminus, the 583-residue chain is Chitinase 2 (583 aa).

A signal peptide spans 1 to 19 (MLSFKSLLAAAVVASSALA). Residues 23–305 (NQVALYWGQN…VQVKNVLNQN (283 aa)) enclose the GH18 domain. Residue Glu153 is the Proton donor of the active site. 3 N-linked (GlcNAc...) asparagine glycosylation sites follow: Asn370, Asn546, and Asn549. Gly560 carries GPI-anchor amidated glycine lipidation. The propeptide at 561 to 583 (AAVANSLNSVWFTVPFLLAAFAF) is removed in mature form.

The protein belongs to the glycosyl hydrolase 18 family. Chitinase class III subfamily. The GPI-anchor is attached to the protein in the endoplasmic reticulum and serves to target the protein to the cell surface. There, the glucosamine-inositol phospholipid moiety is cleaved off and the GPI-modified mannoprotein is covalently attached via its lipidless GPI glycan remnant to the 1,6-beta-glucan of the outer cell wall layer. Post-translationally, proteolytic cleavage by SAP9 and SAP10 leads to the cell wall release of CHT2 and increased chitinase activity, suggesting a direct influence of SAP9 and SAP10 on CHT2 function.

Its subcellular location is the secreted. The protein resides in the cell wall. The protein localises to the membrane. The enzyme catalyses Random endo-hydrolysis of N-acetyl-beta-D-glucosaminide (1-&gt;4)-beta-linkages in chitin and chitodextrins.. Its function is as follows. Chitinase involved in the remodeling of chitin in the fungal cell wall. Plays a role in cell separation. The protein is Chitinase 2 (CHT2) of Candida albicans (strain SC5314 / ATCC MYA-2876) (Yeast).